We begin with the raw amino-acid sequence, 435 residues long: uncharacterized protein (435 aa).

Helical transmembrane passes span 14-34 (VSMA…GVGA), 44-64 (TFIL…KLGA), 84-104 (IITG…IALF), 123-143 (FNIA…NFFG), 153-173 (FIVL…LITI), 187-207 (VSGM…FGVI), 224-244 (AIFI…ISAI), 267-287 (FLGN…ISSA), 324-344 (LYIT…EGVA), 346-366 (ITSA…YILI), 375-395 (IVIF…YYQW), and 400-420 (FVFY…IIYR).

It localises to the cell membrane. This is an uncharacterized protein from Methanocaldococcus jannaschii (strain ATCC 43067 / DSM 2661 / JAL-1 / JCM 10045 / NBRC 100440) (Methanococcus jannaschii).